Here is a 338-residue protein sequence, read N- to C-terminus: DNA-directed RNA polymerase subunit alpha (338 aa).

An alpha N-terminal domain (alpha-NTD) region spans residues 1-234 (MIHKNWQELI…DQLSIFVNFD (234 aa)). Positions 250 to 338 (FNPLLLKKVD…ELAKKYEDNF (89 aa)) are alpha C-terminal domain (alpha-CTD).

Belongs to the RNA polymerase alpha chain family. As to quaternary structure, homodimer. The RNAP catalytic core consists of 2 alpha, 1 beta, 1 beta' and 1 omega subunit. When a sigma factor is associated with the core the holoenzyme is formed, which can initiate transcription.

It carries out the reaction RNA(n) + a ribonucleoside 5'-triphosphate = RNA(n+1) + diphosphate. DNA-dependent RNA polymerase catalyzes the transcription of DNA into RNA using the four ribonucleoside triphosphates as substrates. The sequence is that of DNA-directed RNA polymerase subunit alpha from Jannaschia sp. (strain CCS1).